Reading from the N-terminus, the 441-residue chain is Ribosomal protein uS12 methylthiotransferase RimO (441 aa).

The region spanning 7–117 (PKVSFVSLGC…VLDAVHRALP (111 aa)) is the MTTase N-terminal domain. [4Fe-4S] cluster contacts are provided by Cys16, Cys52, Cys81, Cys148, Cys152, and Cys155. The Radical SAM core domain occupies 134–371 (LTPRHYAYLK…MARQQKISAR (238 aa)). The region spanning 374-440 (KRKVGTRQQV…AYDLHGSVAG (67 aa)) is the TRAM domain.

Belongs to the methylthiotransferase family. RimO subfamily. [4Fe-4S] cluster serves as cofactor.

The protein resides in the cytoplasm. The enzyme catalyses L-aspartate(89)-[ribosomal protein uS12]-hydrogen + (sulfur carrier)-SH + AH2 + 2 S-adenosyl-L-methionine = 3-methylsulfanyl-L-aspartate(89)-[ribosomal protein uS12]-hydrogen + (sulfur carrier)-H + 5'-deoxyadenosine + L-methionine + A + S-adenosyl-L-homocysteine + 2 H(+). Functionally, catalyzes the methylthiolation of an aspartic acid residue of ribosomal protein uS12. In Rhodopseudomonas palustris (strain BisB18), this protein is Ribosomal protein uS12 methylthiotransferase RimO.